The following is a 187-amino-acid chain: Phosphatidylethanolamine-binding protein 1 (187 aa).

Phosphoserine is present on residues Ser6 and Ser13. Residue Thr42 is modified to Phosphothreonine. Ser52, Ser54, Ser98, and Ser153 each carry phosphoserine. The segment at 93 to 134 (KGNDISSGTVLSDYVGSGPPKGTGLHRYVWLVYEQARPLKCD) is interaction with RAF1.

The protein belongs to the phosphatidylethanolamine-binding protein family. As to quaternary structure, has a tendency to form dimers by disulfide cross-linking. Interacts with RAF1 and this interaction is enhanced if RAF1 is phosphorylated on residues 'Ser-338', 'Ser-339', 'Tyr-340' and 'Tyr-341'. Interacts with ALOX15; in response to IL13/interleukin-13, prevents the interaction of PEBP1 with RAF1 to activate the ERK signaling cascade.

The protein resides in the cytoplasm. Functionally, binds ATP, opioids and phosphatidylethanolamine. Has lower affinity for phosphatidylinositol and phosphatidylcholine. Serine protease inhibitor which inhibits thrombin, neuropsin and chymotrypsin but not trypsin, tissue type plasminogen activator and elastase. Inhibits the kinase activity of RAF1 by inhibiting its activation and by dissociating the RAF1/MEK complex and acting as a competitive inhibitor of MEK phosphorylation. In terms of biological role, HCNP may be involved in the function of the presynaptic cholinergic neurons of the central nervous system. HCNP increases the production of choline acetyltransferase but not acetylcholinesterase. Seems to be mediated by a specific receptor. In Macaca fascicularis (Crab-eating macaque), this protein is Phosphatidylethanolamine-binding protein 1 (PEBP1).